Here is a 425-residue protein sequence, read N- to C-terminus: Serine--tRNA ligase (425 aa).

230-232 (TGE) serves as a coordination point for L-serine. Position 261–263 (261–263 (RKE)) interacts with ATP. Glu284 provides a ligand contact to L-serine. 348-351 (EISS) contributes to the ATP binding site. Position 385 (Ser385) interacts with L-serine.

Belongs to the class-II aminoacyl-tRNA synthetase family. Type-1 seryl-tRNA synthetase subfamily. Homodimer. The tRNA molecule binds across the dimer.

It localises to the cytoplasm. The enzyme catalyses tRNA(Ser) + L-serine + ATP = L-seryl-tRNA(Ser) + AMP + diphosphate + H(+). It catalyses the reaction tRNA(Sec) + L-serine + ATP = L-seryl-tRNA(Sec) + AMP + diphosphate + H(+). Its pathway is aminoacyl-tRNA biosynthesis; selenocysteinyl-tRNA(Sec) biosynthesis; L-seryl-tRNA(Sec) from L-serine and tRNA(Sec): step 1/1. Functionally, catalyzes the attachment of serine to tRNA(Ser). Is also able to aminoacylate tRNA(Sec) with serine, to form the misacylated tRNA L-seryl-tRNA(Sec), which will be further converted into selenocysteinyl-tRNA(Sec). This Wolbachia sp. subsp. Brugia malayi (strain TRS) protein is Serine--tRNA ligase.